A 322-amino-acid chain; its full sequence is Transcription initiation factor IIB (322 aa).

A run of 2 repeats spans residues 125–213 (SLIN…VRDL) and 224–305 (NFVY…EIAQ).

This sequence belongs to the TFIIB family.

In terms of biological role, stabilizes TBP binding to an archaeal box-A promoter. Also responsible for recruiting RNA polymerase II to the pre-initiation complex (DNA-TBP-TFIIB). This is Transcription initiation factor IIB from Aeropyrum pernix (strain ATCC 700893 / DSM 11879 / JCM 9820 / NBRC 100138 / K1).